The following is a 208-amino-acid chain: dITP/XTP pyrophosphatase (208 aa).

S16–K21 contributes to the substrate binding site. Catalysis depends on D79, which acts as the Proton acceptor. Residue D79 participates in Mg(2+) binding. Residues S80, F166–D169, K189, and H194–R195 each bind substrate.

It belongs to the HAM1 NTPase family. As to quaternary structure, homodimer. Mg(2+) is required as a cofactor.

It catalyses the reaction XTP + H2O = XMP + diphosphate + H(+). The catalysed reaction is dITP + H2O = dIMP + diphosphate + H(+). It carries out the reaction ITP + H2O = IMP + diphosphate + H(+). Its function is as follows. Pyrophosphatase that catalyzes the hydrolysis of nucleoside triphosphates to their monophosphate derivatives, with a high preference for the non-canonical purine nucleotides XTP (xanthosine triphosphate), dITP (deoxyinosine triphosphate) and ITP. Seems to function as a house-cleaning enzyme that removes non-canonical purine nucleotides from the nucleotide pool, thus preventing their incorporation into DNA/RNA and avoiding chromosomal lesions. The sequence is that of dITP/XTP pyrophosphatase from Acinetobacter baumannii (strain AB307-0294).